Here is a 155-residue protein sequence, read N- to C-terminus: Antitoxin HicB 1 (155 aa).

Positions 99 to 153 (MLNAFLDSKLTQIELANRMGVKKQEVTRIFDLRHSTKIDTVGKVASAIGHQLTLS) constitute an HTH cro/C1-type domain. Positions 110–129 (QIELANRMGVKKQEVTRIFD) form a DNA-binding region, H-T-H motif.

This sequence belongs to the HicB antitoxin family. Probably forms a complex with the probable mRNA interferase HicA1 (its cognate toxin); when complexed with HicA 1 inhibits the toxin activity.

Its function is as follows. Antitoxin component of a type II toxin-antitoxin (TA) system. Functions as an mRNA interferase antitoxin preventing effects of the HicA 1 toxin. This chain is Antitoxin HicB 1 (hicB1), found in Photorhabdus laumondii subsp. laumondii (strain DSM 15139 / CIP 105565 / TT01) (Photorhabdus luminescens subsp. laumondii).